The sequence spans 209 residues: Uracil phosphoribosyltransferase (209 aa).

5-phospho-alpha-D-ribose 1-diphosphate contacts are provided by residues R79, R104, and 131-139 (DPMLATGGS). Uracil contacts are provided by residues I194 and 199 to 201 (GDA). D200 serves as a coordination point for 5-phospho-alpha-D-ribose 1-diphosphate.

The protein belongs to the UPRTase family. Requires Mg(2+) as cofactor.

The enzyme catalyses UMP + diphosphate = 5-phospho-alpha-D-ribose 1-diphosphate + uracil. The protein operates within pyrimidine metabolism; UMP biosynthesis via salvage pathway; UMP from uracil: step 1/1. Its activity is regulated as follows. Allosterically activated by GTP. Functionally, catalyzes the conversion of uracil and 5-phospho-alpha-D-ribose 1-diphosphate (PRPP) to UMP and diphosphate. The chain is Uracil phosphoribosyltransferase from Streptococcus pneumoniae serotype 4 (strain ATCC BAA-334 / TIGR4).